The primary structure comprises 469 residues: Chromosomal replication initiator protein DnaA (469 aa).

Residues 1–83 (MSEWDYKIFW…KKISIDFIIK (83 aa)) are domain I, interacts with DnaA modulators. The interval 83-128 (KPNTSEDLSKAENEGGNDKKEDAAKPSSAESKKKSVKTEGGRGQHP) is domain II. Positions 89–131 (DLSKAENEGGNDKKEDAAKPSSAESKKKSVKTEGGRGQHPDLR) are disordered. Positions 129 to 344 (DLRPEYNFED…AALTKLIAYT (216 aa)) are domain III, AAA+ region. ATP contacts are provided by glycine 173, glycine 175, lysine 176, and threonine 177. The segment at 345–469 (ELTKKTMDEA…RNTIKENTNK (125 aa)) is domain IV, binds dsDNA.

This sequence belongs to the DnaA family. In terms of assembly, oligomerizes as a right-handed, spiral filament on DNA at oriC.

The protein resides in the cytoplasm. Plays an essential role in the initiation and regulation of chromosomal replication. ATP-DnaA binds to the origin of replication (oriC) to initiate formation of the DNA replication initiation complex once per cell cycle. Binds the DnaA box (a 9 base pair repeat at the origin) and separates the double-stranded (ds)DNA. Forms a right-handed helical filament on oriC DNA; dsDNA binds to the exterior of the filament while single-stranded (ss)DNA is stabiized in the filament's interior. The ATP-DnaA-oriC complex binds and stabilizes one strand of the AT-rich DNA unwinding element (DUE), permitting loading of DNA polymerase. After initiation quickly degrades to an ADP-DnaA complex that is not apt for DNA replication. Binds acidic phospholipids. This is Chromosomal replication initiator protein DnaA from Treponema denticola (strain ATCC 35405 / DSM 14222 / CIP 103919 / JCM 8153 / KCTC 15104).